The following is a 150-amino-acid chain: Cytochrome b5 type B (150 aa).

Residues 1–15 constitute a propeptide that is removed on maturation; sequence MSGSMATAEASGSDG. The disordered stretch occupies residues 1–21; that stretch reads MSGSMATAEASGSDGKGQEVE. Ser23 carries the post-translational modification Phosphoserine. Residues 24–100 enclose the Cytochrome b5 heme-binding domain; that stretch reads VTYYRMEEVA…LKQYYIGDIH (77 aa). N6-acetyllysine is present on Lys34. Ser37 is subject to Phosphoserine. Position 39 is an N6-methyllysine (Lys39). His59 and His83 together coordinate heme. Ser84 bears the Phosphoserine mark. The chain crosses the membrane as a helical span at residues 122–144; it reads CWAYWILPIIGAVLLGFLYRYYT.

Belongs to the cytochrome b5 family. In terms of assembly, component of a complex composed of cytochrome b5, NADH-cytochrome b5 reductase (CYB5R3) and MTARC2.

It localises to the mitochondrion outer membrane. Cytochrome b5 is a membrane-bound hemoprotein functioning as an electron carrier for several membrane-bound oxygenases. The chain is Cytochrome b5 type B (CYB5B) from Pongo abelii (Sumatran orangutan).